The sequence spans 612 residues: GPI mannosyltransferase 3 (612 aa).

Helical transmembrane passes span 92 to 112 and 145 to 165; these read LLAIASKEALSIICSIGAGLM and VIYAPKLFMALLAATGEYFTI. N-linked (GlcNAc...) asparagine glycosylation occurs at Asn-188. Helical transmembrane passes span 192-212, 254-274, and 288-308; these read IALLLTLTNFFNCFFITRTFI, RPSNAIIWIVLGFFLTINLLL, and ILVVFTITMLVNVVIDFYFYN. Asn-321 carries an N-linked (GlcNAc...) asparagine glycan. The helical transmembrane segment at 339 to 359 threads the bilayer; the sequence is LLQSLPIMLGYSLPLFIYGLF. Asn-361 carries an N-linked (GlcNAc...) asparagine glycan. Transmembrane regions (helical) follow at residues 371 to 391, 398 to 418, and 429 to 449; these read FGALRQIKFVLILNIIFYSYL, FIYPLQPLFCLLSALGALKLA, and EYVWIIPLMSMIVSIFITTFQ. Residues Asn-508, Asn-526, and Asn-550 are each glycosylated (N-linked (GlcNAc...) asparagine).

It belongs to the glycosyltransferase 22 family. PIGB subfamily.

The protein localises to the endoplasmic reticulum membrane. The protein operates within glycolipid biosynthesis; glycosylphosphatidylinositol-anchor biosynthesis. Functionally, mannosyltransferase involved in glycosylphosphatidylinositol-anchor biosynthesis. Transfers the third mannose to Man2-GlcN-acyl-PI during GPI precursor assembly. This is GPI mannosyltransferase 3 (GPI10) from Candida glabrata (strain ATCC 2001 / BCRC 20586 / JCM 3761 / NBRC 0622 / NRRL Y-65 / CBS 138) (Yeast).